Consider the following 792-residue polypeptide: Ribonucleoside-diphosphate reductase large subunit (792 aa).

An ATP-cone domain is found at 1 to 92 (MHVIKRDGRQ…VSNLHKETKK (92 aa)). ATP is bound by residues 5–6 (KR), 11–17 (ERVMFDK), T53, and D57. K17 is subject to N6-acetyllysine. Positions 202 and 217 each coordinate GDP. C218 and C444 are joined by a disulfide. Residues 226–228 (DSI), K243, R256, and 263–264 (AG) contribute to the dTTP site. K376 bears the N6-acetyllysine mark. N427 serves as a coordination point for GDP. The active-site Proton acceptor is N427. Catalysis depends on C429, which acts as the Cysteine radical intermediate. Residues E431 and 604–607 (TAST) each bind GDP. E431 (proton acceptor) is an active-site residue. T751 is subject to Phosphothreonine.

This sequence belongs to the ribonucleoside diphosphate reductase large chain family. In terms of assembly, heterodimer of a large and a small subunit. Interacts with RRM2B. Interacts with AHCYL1 which inhibits its activity.

The protein resides in the cytoplasm. It carries out the reaction a 2'-deoxyribonucleoside 5'-diphosphate + [thioredoxin]-disulfide + H2O = a ribonucleoside 5'-diphosphate + [thioredoxin]-dithiol. With respect to regulation, under complex allosteric control mediated by deoxynucleoside triphosphates and ATP binding to separate specificity and activation sites on the M1 subunit. The type of nucleotide bound at the specificity site determines substrate preference. It seems probable that ATP makes the enzyme reduce CDP and UDP, dGTP favors ADP reduction and dTTP favors GDP reduction. Stimulated by ATP and inhibited by dATP binding to the activity site, the dATP inhibition is mediated by AHCYL1 which stabilizes dATP in the site. In terms of biological role, provides the precursors necessary for DNA synthesis. Catalyzes the biosynthesis of deoxyribonucleotides from the corresponding ribonucleotides. This is Ribonucleoside-diphosphate reductase large subunit (Rrm1) from Mus musculus (Mouse).